A 129-amino-acid polypeptide reads, in one-letter code: MSRKESRVQAFQTLFQLEMKDSDLTINEAISFIKDGNPDLDFEFIHWLVSGVKDHEPVLDETISPYLKDWTIARLLKTDRIILRMATYEILHSDTPAKVVMNEAVELTKQFSDDDHYKFINGVLSNIKK.

The protein belongs to the NusB family.

In terms of biological role, involved in transcription antitermination. Required for transcription of ribosomal RNA (rRNA) genes. Binds specifically to the boxA antiterminator sequence of the ribosomal RNA (rrn) operons. This Staphylococcus aureus (strain bovine RF122 / ET3-1) protein is Transcription antitermination protein NusB.